A 405-amino-acid chain; its full sequence is Pentatricopeptide repeat-containing protein At3g14580, mitochondrial (405 aa).

The N-terminal 37 residues, 1 to 37 (MILRRLVLSATSNSNPRRSQSLSSSGVRILSSSSSDR), are a transit peptide targeting the mitochondrion. Residues 13–44 (NSNPRRSQSLSSSGVRILSSSSSDRYTSSSQR) form a disordered region. PPR repeat units follow at residues 94–124 (TESLYALMINKFGQAKMYDEIEEVMRTIKLE), 130–165 (SEEFFYNLMRIYGNLAGRINRAIEILFGMPDFGCWP), 166–200 (SSKSFNFILNLLVSAKLFDEIHKIFVSAPKLGVEI), 201–235 (DACCLNILIKGLCESGNLEAALQLLDEFPQQKSRP), 236–270 (NVMTFSPLIRGFCNKGKFEEAFKLLERMEKERIEP), 271–305 (DTITFNILISGLRKKGRVEEGIDLLERMKVKGCEP), 306–340 (NPGTYQEVLYGLLDKKRNLEAKEMMSQMISWGMRP), and 341–375 (SFLSYKKMVLGLCETKSVVEMDWVLRQMVNHGFVP).

This sequence belongs to the PPR family. P subfamily.

The protein resides in the mitochondrion. The protein is Pentatricopeptide repeat-containing protein At3g14580, mitochondrial of Arabidopsis thaliana (Mouse-ear cress).